We begin with the raw amino-acid sequence, 183 residues long: Oligoribonuclease (183 aa).

An Exonuclease domain is found at Leu-10 to Leu-173. Tyr-131 is an active-site residue.

The protein belongs to the oligoribonuclease family.

The protein localises to the cytoplasm. In terms of biological role, 3'-to-5' exoribonuclease specific for small oligoribonucleotides. The chain is Oligoribonuclease from Idiomarina loihiensis (strain ATCC BAA-735 / DSM 15497 / L2-TR).